The sequence spans 414 residues: 2,3-diketo-5-methylthiopentyl-1-phosphate enolase (414 aa).

The active-site Proton acceptor is the K99. Substrate-binding positions include K148, 174–177 (KDDE), H265, G338, and 360–361 (GG). K174, D176, and E177 together coordinate Mg(2+). Residue K174 is modified to N6-carboxylysine.

This sequence belongs to the RuBisCO large chain family. Type IV subfamily. In terms of assembly, homodimer. Mg(2+) serves as cofactor.

The catalysed reaction is 5-methylsulfanyl-2,3-dioxopentyl phosphate = 2-hydroxy-5-methylsulfanyl-3-oxopent-1-enyl phosphate. The protein operates within amino-acid biosynthesis; L-methionine biosynthesis via salvage pathway; L-methionine from S-methyl-5-thio-alpha-D-ribose 1-phosphate: step 3/6. Its function is as follows. Catalyzes the enolization of 2,3-diketo-5-methylthiopentyl-1-phosphate (DK-MTP-1-P) into 2-hydroxy-3-keto-5-methylthiopentenyl-1-phosphate (HK-MTPenyl-1-P). The chain is 2,3-diketo-5-methylthiopentyl-1-phosphate enolase from Bacillus mycoides (strain KBAB4) (Bacillus weihenstephanensis).